We begin with the raw amino-acid sequence, 558 residues long: FRIGIDA-like protein 3 (558 aa).

A coiled-coil region spans residues 9–102 (SLMDSTSSKI…ALERLQKKRD (94 aa)). Residues 454 to 463 (AKADKKRATE) show a composition bias toward basic and acidic residues. The segment at 454 to 494 (AKADKKRATEPMKPQPKRPRGAQPRVTDNNNNINNNKTGYG) is disordered.

It belongs to the Frigida family.

The chain is FRIGIDA-like protein 3 (FRL3) from Arabidopsis thaliana (Mouse-ear cress).